The sequence spans 437 residues: Glutamyl-tRNA reductase (437 aa).

Residues 49-52, Ser109, 114-116, and Gln120 each bind substrate; these read TCNR and EGQ. The active-site Nucleophile is the Cys50. 198-203 lines the NADP(+) pocket; that stretch reads GAGRMS.

The protein belongs to the glutamyl-tRNA reductase family. Homodimer.

The enzyme catalyses (S)-4-amino-5-oxopentanoate + tRNA(Glu) + NADP(+) = L-glutamyl-tRNA(Glu) + NADPH + H(+). Its pathway is porphyrin-containing compound metabolism; protoporphyrin-IX biosynthesis; 5-aminolevulinate from L-glutamyl-tRNA(Glu): step 1/2. It participates in porphyrin-containing compound metabolism; chlorophyll biosynthesis. Its function is as follows. Catalyzes the NADPH-dependent reduction of glutamyl-tRNA(Glu) to glutamate 1-semialdehyde (GSA). The polypeptide is Glutamyl-tRNA reductase (Synechococcus sp. (strain CC9311)).